The chain runs to 484 residues: tRNA sulfurtransferase (484 aa).

Residues 63–167 (QAFGERLACI…RDKLYMVTKR (105 aa)) enclose the THUMP domain. ATP is bound by residues 185-186 (LI), lysine 267, glycine 289, and glutamine 298. Cysteine 346 and cysteine 458 form a disulfide bridge. The region spanning 406 to 484 (IETNEVVIDI…GYTNVKVYRP (79 aa)) is the Rhodanese domain. Cysteine 458 functions as the Cysteine persulfide intermediate in the catalytic mechanism.

This sequence belongs to the ThiI family.

Its subcellular location is the cytoplasm. The enzyme catalyses [ThiI sulfur-carrier protein]-S-sulfanyl-L-cysteine + a uridine in tRNA + 2 reduced [2Fe-2S]-[ferredoxin] + ATP + H(+) = [ThiI sulfur-carrier protein]-L-cysteine + a 4-thiouridine in tRNA + 2 oxidized [2Fe-2S]-[ferredoxin] + AMP + diphosphate. The catalysed reaction is [ThiS sulfur-carrier protein]-C-terminal Gly-Gly-AMP + S-sulfanyl-L-cysteinyl-[cysteine desulfurase] + AH2 = [ThiS sulfur-carrier protein]-C-terminal-Gly-aminoethanethioate + L-cysteinyl-[cysteine desulfurase] + A + AMP + 2 H(+). Its pathway is cofactor biosynthesis; thiamine diphosphate biosynthesis. Catalyzes the ATP-dependent transfer of a sulfur to tRNA to produce 4-thiouridine in position 8 of tRNAs, which functions as a near-UV photosensor. Also catalyzes the transfer of sulfur to the sulfur carrier protein ThiS, forming ThiS-thiocarboxylate. This is a step in the synthesis of thiazole, in the thiamine biosynthesis pathway. The sulfur is donated as persulfide by IscS. The polypeptide is tRNA sulfurtransferase (Shewanella putrefaciens (strain CN-32 / ATCC BAA-453)).